The primary structure comprises 1066 residues: Thyrotropin-releasing hormone-degrading ectoenzyme (1066 aa).

The span at 1–14 (MALDGERGEQEEEK) shows a compositional bias: basic and acidic residues. The disordered stretch occupies residues 1 to 43 (MALDGERGEQEEEKKKKKKKKKRKKKEEEGAEKSSSPFAATMG). Topologically, residues 1–81 (MALDGERGEQ…ERHIAVHKRL (81 aa)) are cytoplasmic. Over residues 15–25 (KKKKKKKKRKK) the composition is skewed to basic residues. T71 bears the Phosphothreonine; by PKC mark. A helical; Signal-anchor for type II membrane protein membrane pass occupies residues 82–102 (VLAFAVSIVALLAVTMLAVLL). Residues 103-1066 (SLRFDECGAS…FQWLGKAMRH (964 aa)) lie on the Extracellular side of the membrane. The disordered stretch occupies residues 118–176 (TDGGLGGFPERDSNSSFPGSARRNHHAGGESSQRESGEVGTPGTPSAQPPSEEEREQWQ). N-linked (GlcNAc...) asparagine glycans are attached at residues N131, N202, N217, N264, and N380. Substrate is bound at residue 446 to 450 (AAMEN). Residue H482 coordinates Zn(2+). Catalysis depends on E483, which acts as the Proton acceptor. H486 and E505 together coordinate Zn(2+). 7 N-linked (GlcNAc...) asparagine glycosylation sites follow: N647, N676, N691, N705, N726, N842, and N948.

The protein belongs to the peptidase M1 family. Homodimer; disulfide-linked. Requires Zn(2+) as cofactor.

The protein localises to the membrane. It catalyses the reaction Release of the N-terminal pyroglutamyl group from pGlu-|-His-Xaa tripeptides and pGlu-|-His-Xaa-Gly tetrapeptides.. Specific inactivation of TRH after its release. The polypeptide is Thyrotropin-releasing hormone-degrading ectoenzyme (Trhde) (Mus musculus (Mouse)).